A 671-amino-acid chain; its full sequence is DNA ligase (671 aa).

NAD(+) contacts are provided by residues Asp32–Asp36, Ser81–Leu82, and Glu113. Lys115 serves as the catalytic N6-AMP-lysine intermediate. NAD(+) is bound by residues Arg136, Glu173, Lys290, and Lys314. Zn(2+) contacts are provided by Cys408, Cys411, Cys426, and Cys432. The region spanning Glu593–Ala671 is the BRCT domain.

Belongs to the NAD-dependent DNA ligase family. LigA subfamily. The cofactor is Mg(2+). Mn(2+) serves as cofactor.

The enzyme catalyses NAD(+) + (deoxyribonucleotide)n-3'-hydroxyl + 5'-phospho-(deoxyribonucleotide)m = (deoxyribonucleotide)n+m + AMP + beta-nicotinamide D-nucleotide.. Its function is as follows. DNA ligase that catalyzes the formation of phosphodiester linkages between 5'-phosphoryl and 3'-hydroxyl groups in double-stranded DNA using NAD as a coenzyme and as the energy source for the reaction. It is essential for DNA replication and repair of damaged DNA. This Salmonella paratyphi A (strain ATCC 9150 / SARB42) protein is DNA ligase.